A 61-amino-acid polypeptide reads, in one-letter code: Small ribosomal subunit protein uS14 (61 aa).

Cysteine 24, cysteine 27, cysteine 40, and cysteine 43 together coordinate Zn(2+).

It belongs to the universal ribosomal protein uS14 family. Zinc-binding uS14 subfamily. Part of the 30S ribosomal subunit. Contacts proteins S3 and S10. Zn(2+) is required as a cofactor.

In terms of biological role, binds 16S rRNA, required for the assembly of 30S particles and may also be responsible for determining the conformation of the 16S rRNA at the A site. This Trichlorobacter lovleyi (strain ATCC BAA-1151 / DSM 17278 / SZ) (Geobacter lovleyi) protein is Small ribosomal subunit protein uS14.